Consider the following 398-residue polypeptide: 1-deoxy-D-xylulose 5-phosphate reductoisomerase (398 aa).

5 residues coordinate NADPH: Thr-10, Gly-11, Ser-12, Ile-13, and Asn-124. Lys-125 serves as a coordination point for 1-deoxy-D-xylulose 5-phosphate. An NADPH-binding site is contributed by Glu-126. Asp-150 serves as a coordination point for Mn(2+). Residues Ser-151, Glu-152, Ser-186, and His-209 each coordinate 1-deoxy-D-xylulose 5-phosphate. Glu-152 serves as a coordination point for Mn(2+). Gly-215 contributes to the NADPH binding site. Residues Ser-222, Asn-227, Lys-228, and Glu-231 each contribute to the 1-deoxy-D-xylulose 5-phosphate site. Position 231 (Glu-231) interacts with Mn(2+).

This sequence belongs to the DXR family. Mg(2+) serves as cofactor. Mn(2+) is required as a cofactor.

The enzyme catalyses 2-C-methyl-D-erythritol 4-phosphate + NADP(+) = 1-deoxy-D-xylulose 5-phosphate + NADPH + H(+). Its pathway is isoprenoid biosynthesis; isopentenyl diphosphate biosynthesis via DXP pathway; isopentenyl diphosphate from 1-deoxy-D-xylulose 5-phosphate: step 1/6. In terms of biological role, catalyzes the NADPH-dependent rearrangement and reduction of 1-deoxy-D-xylulose-5-phosphate (DXP) to 2-C-methyl-D-erythritol 4-phosphate (MEP). The protein is 1-deoxy-D-xylulose 5-phosphate reductoisomerase of Tolumonas auensis (strain DSM 9187 / NBRC 110442 / TA 4).